Here is an 840-residue protein sequence, read N- to C-terminus: MRIVKFPWFSHHEESRDYEIYTVDVSPDGKRVATGGLDGKIRIWSVDALVSAAAGESGVDRDTHRPLASMSRHTGSVTCVKFSPDGNYLASGSDDRILLIWAMDEENHGGSFGSEGEKEHWTVRKRLVAHDNDIQDICWAPDSSILVTVGLDRSVIVWNGLNFERLKRFDVHQSLVKGVIFDPANKYFATASDDRTMRVFRYHKTGEVSFTIEQVIVEPFIASPLTTYFRRLSWSPDGQHIAVPNATNGPVSSVAIINRGTWDSSISLIGHDAPTEVARFNPRLFKSDVEKKAKNAKDELSKDTKNNKKLESIIATAGQDKSLALWITSRPRPIFVAYDIAQKSITDMAWNPNGNILFVTSLDSSIVMLMFDANELGMPIPIEGNMEQLHRYGVDKDSFDLPESVNQLLLEDKYGTKKKQHELSSSTQSTALERRLEPNQFQKKINSREISPLKSTEKVNILIPKRKKDMKMNKVIVKDGKKRVAPTLISTAGLQPTVTNVKEVASSSGKVVKPVLKKTNDINEYSGRLSTPSIPIPRLGIHTLVMGLKERGKDKFERGAEVGPDDELREASNQITFDGESYGQDSLMKDEYRMTLNNRLTKEKVSSNEPYLRYIENTGVIADTDAVLLECGSIDDFFTLEIRNGVERAIQFDSDALFDNPTRILGYHEGQRTIEAFIPNVIISGVGSPVSKYWSLATADGFIYIISYNGQLLIPKINLGQKVVKQVVCSNYLLVLTERGLFYAWDISAKRSVIKNVSILPIINNDPVEGNRVRVNKSIRKFEFEVSEKTVIVHLTNNRSFKWLAYFGCWSEIQELVAPRETVANILLTENEIPPQSSSI.

7 WD repeats span residues Ser-15 to Ala-54, Arg-72 to Ser-111, Ala-129 to Arg-168, Val-171 to Phe-210, Pro-224 to Ser-267, Lys-292 to Val-336, and Ile-340 to Pro-381.

This sequence belongs to the WD repeat HIR1 family.

Its subcellular location is the nucleus. Its function is as follows. Required for replication-independent chromatin assembly and for the periodic repression of histone gene transcription during the cell cycle. This chain is Protein HIR1 (HIR1), found in Candida glabrata (strain ATCC 2001 / BCRC 20586 / JCM 3761 / NBRC 0622 / NRRL Y-65 / CBS 138) (Yeast).